A 762-amino-acid polypeptide reads, in one-letter code: MKFTNGYWLNREEYDVNSPKETYDAQQNGKTITAFAPYTRIMSRGDQLNLGTTTITLTSPVENVIGVKLEHFDTNEHGPEFKINNLDPEVAIEVNDQVASLQSGDLKVTLPLRTDFEMKFTANGQLVTQSETKPQATIWNHDTKVNYMREQLSMGIDEKIYGLGERFTNFVKNGQVVDTWNQDGGTGSEQAYKNIPFYISSNGYGVFVDESQRVSFEIGSENVDRVQFSTEGQSLQYYVIYGPTPKEVLHRYTQLTGAIKLPPAWSFGLWLTTSFTTDYSEETVLKFIDGMQEHHIPLDVFHFDCFWQKGFEWCTLEWDKEQFPDPEGLLKKIHDRGIKVCVWLNPYIAQKSPLFKEAKDKGYLLTRENGDIWQWDLWQAGNGFVDFTNPAAVKWYQDKLKVLLDMGVDSFKTDFGERIPAEDVKFFDGSNPQQEHNYYTLQYNRAVYEVIQQEKGADEAVLFARSQRLVHNPIQYTGAATISRSTAQCVIQLRGGLSFLLSGFGFWSHDIGGFEDGPGTPTADLYKRWSQFGLLSSHSRYHGSDVYRVPWNFDDEAVENTRKYVNKLSLMPYIYTEAAHAAAAYGNPLMRPMFLEFGDDDNVYDNATQYMFGSKILVAPIFNDQGKAHFYLPSGKWTSILDGKVYQAPRTGEWVNEVFDELDLPVLVRQNSIIVRNEKAVDAAYDYTKDVDIHLYQIQDGNVSSKVVDEHGQDTAEIKVERANGRIVINTVGLTGDSTVYVHENNDTIKLSLVDGKAEVTL.

Catalysis depends on Asp414, which acts as the Nucleophile. Residue Glu417 is part of the active site.

This sequence belongs to the glycosyl hydrolase 31 family.

The protein resides in the cell membrane. It carries out the reaction Hydrolysis of terminal, non-reducing alpha-D-xylose residues with release of alpha-D-xylose.. Its function is as follows. Involved in the metabolism of isoprimeverose. Hydrolyzes isoprimeverose into equimolar amounts of glucose and xylose. In vitro, can also use p-nitrophenyl-alpha-D-xylopyranoside (alpha-p-NPX). This Lactiplantibacillus pentosus (Lactobacillus pentosus) protein is Alpha-xylosidase XylQ.